The primary structure comprises 184 residues: Photosystem I assembly protein Ycf4 (184 aa).

2 helical membrane-spanning segments follow: residues Leu19–Gly39 and Phe57–Ser77.

Belongs to the Ycf4 family.

The protein localises to the plastid. It localises to the chloroplast thylakoid membrane. Seems to be required for the assembly of the photosystem I complex. This chain is Photosystem I assembly protein Ycf4, found in Jasminum nudiflorum (Winter jasmine).